We begin with the raw amino-acid sequence, 421 residues long: Probable G-protein coupled receptor 151 (421 aa).

Residues 1–44 lie on the Extracellular side of the membrane; sequence MGKATLAVFADSDSSNMNESFAHLHFAGGYLPSDSKGWRTIIPS. N-linked (GlcNAc...) asparagine glycosylation occurs at Asn18. The helical transmembrane segment at 45-65 threads the bilayer; it reads LLAAVCLVGFVGNLCVIGLLL. At 66–74 the chain is on the cytoplasmic side; that stretch reads HGVWKRKPS. The chain crosses the membrane as a helical span at residues 75 to 95; it reads MIHSLILNLSLADISLLLFSA. The Extracellular portion of the chain corresponds to 96-122; it reads PVRATAYVKGVWDLGWFVCKSSDWFTH. A disulfide bond links Cys114 and Cys190. Residues 123–143 traverse the membrane as a helical segment; it reads MCMAAKSLTFVVVAKVCFMYA. The Cytoplasmic portion of the chain corresponds to 144 to 156; sequence SDPAKPVGTHNCT. A helical transmembrane segment spans residues 157–177; that stretch reads IWSLLGAIWVVASLLPLPEWF. The Extracellular segment spans residues 178–204; the sequence is FSTTRHHAGVEMCLVDVPAVAAEFMSL. The chain crosses the membrane as a helical span at residues 205–225; it reads FGKLYPLLVFCLPLLLAGFYF. At 226-258 the chain is on the cytoplasmic side; that stretch reads WRAYNQCKIRCAKTQNLRNQMRSKQLTVMLLST. Residues 259–279 form a helical membrane-spanning segment; sequence AVTSALLWLPEWIAWLWVWHL. The Extracellular segment spans residues 280 to 289; sequence KAGGPMPPQG. A helical transmembrane segment spans residues 290 to 310; that stretch reads FIALSQVLMFSISTVNPLIFL. The Cytoplasmic segment spans residues 311–421; it reads MMSEEFKAGL…HEGQETKGCN (111 aa). Disordered stretches follow at residues 346 to 381 and 394 to 421; these read IETLPGKAPSPETQTCIPDTDRCGSPDSSKETTDKV and HERDVGPSAQDNDPIPWEHEGQETKGCN. Basic and acidic residues-rich tracts occupy residues 364–379 and 409–421; these read DTDRCGSPDSSKETTD and PWEHEGQETKGCN.

The protein belongs to the G-protein coupled receptor 1 family. Exclusively expressed in neurons of the habenular complex. The expression is particularly prominent in the medial habenular nucleus, whereas the lateral habenular nucleus exhibited a lower level of expression.

The protein localises to the cell membrane. Functionally, orphan receptor. The polypeptide is Probable G-protein coupled receptor 151 (Gpr151) (Rattus norvegicus (Rat)).